Reading from the N-terminus, the 139-residue chain is GSK3B-interacting protein (139 aa).

Positions 41–45 (VNDVL) are required for PRKAR2A interaction; contributes to a protective effect against H(2)O(2)-induced apoptosis. An interaction with GSK3B and acts as a GSK3B inhibitor region spans residues 115-139 (SPAYREAFGNALLQRLEALKRDGQS).

This sequence belongs to the GSKIP family. As to quaternary structure, forms a complex composed of PRKAR2A or PRKAR2B, GSK3B and GSKIP through GSKIP interaction; facilitates PKA-induced phosphorylation of GSK3B leading to GSK3B inactivation; recruits DNM1L through GSK3B for PKA-mediated phosphorylation of DNM1L; promotes beta-catenin degradation through GSK3B-induced phosphorylation of beta-catenin; stabilizes beta-catenin and enhances Wnt-induced signaling through PKA-induced phosphorylation of beta-catenin. Interacts with GSK3B; induces GSK3B-mediated phosphorylation of GSKIP and inhibits GSK3B kinase activity. In terms of processing, phosphorylated by GSK3B.

Its subcellular location is the cytoplasm. It is found in the nucleus. A-kinase anchoring protein for GSK3B and PKA that regulates or facilitates their kinase activity towards their targets. The ternary complex enhances Wnt-induced signaling by facilitating the GSK3B- and PKA-induced phosphorylation of beta-catenin leading to beta-catenin degradation and stabilization respectively. Upon cAMP activation, the ternary complex contributes to neuroprotection against oxidative stress-induced apoptosis by facilitating the PKA-induced phosphorylation of DML1 and PKA-induced inactivation of GSK3B. During neurite outgrowth promotes neuron proliferation; while increases beta-catenin-induced transcriptional activity through GSK3B kinase activity inhibition, reduces N-cadherin level to promote cell cycle progression. May play a role in cleft palate formation and is required for postnatal life through modulation of the activity of GSK3B during development. The chain is GSK3B-interacting protein from Mus musculus (Mouse).